Reading from the N-terminus, the 605-residue chain is Poly [ADP-ribose] polymerase 2-B (605 aa).

The disordered stretch occupies residues 96–122; it reads NAAAAAAVTDGGDQDKTKSAKDDDGDD. The span at 108–122 shows a compositional bias: basic and acidic residues; that stretch reads DQDKTKSAKDDDGDD. Residues 153–260 enclose the WGR domain; the sequence is AYHVLQVGDE…TKLETRTASF (108 aa). The region spanning 250 to 370 is the PARP alpha-helical domain; it reads ETKLETRTAS…EIEIAIKLLE (121 aa). The PARP catalytic domain occupies 378-605; that stretch reads HPLYARYKQF…NVNFNFKRWG (228 aa).

It belongs to the ARTD/PARP family.

The protein resides in the nucleus. It carries out the reaction NAD(+) + (ADP-D-ribosyl)n-acceptor = nicotinamide + (ADP-D-ribosyl)n+1-acceptor + H(+).. It catalyses the reaction L-aspartyl-[protein] + NAD(+) = 4-O-(ADP-D-ribosyl)-L-aspartyl-[protein] + nicotinamide. The enzyme catalyses L-glutamyl-[protein] + NAD(+) = 5-O-(ADP-D-ribosyl)-L-glutamyl-[protein] + nicotinamide. Functionally, involved in the base excision repair (BER) pathway, by catalyzing the poly(ADP-ribosyl)ation of a limited number of acceptor proteins involved in chromatin architecture and in DNA metabolism. This modification follows DNA damages and appears as an obligatory step in a detection/signaling pathway leading to the reparation of DNA strand breaks. In Oryza sativa subsp. japonica (Rice), this protein is Poly [ADP-ribose] polymerase 2-B (PARP2-B).